Reading from the N-terminus, the 279-residue chain is Large ribosomal subunit protein uL2 (279 aa).

2 disordered regions span residues 31–61 and 222–279; these read KSLLEPLTKSGGRNSAGRKTSRHRGGGHKRH and GMAM…RNAK. Positions 49 to 61 are enriched in basic residues; that stretch reads KTSRHRGGGHKRH. Residues 232–242 are compositionally biased toward gly residues; that stretch reads MGGGEGKSKSG. Basic residues predominate over residues 259–268; sequence LKTRNRKKAS.

This sequence belongs to the universal ribosomal protein uL2 family. As to quaternary structure, part of the 50S ribosomal subunit. Forms a bridge to the 30S subunit in the 70S ribosome.

Its function is as follows. One of the primary rRNA binding proteins. Required for association of the 30S and 50S subunits to form the 70S ribosome, for tRNA binding and peptide bond formation. It has been suggested to have peptidyltransferase activity; this is somewhat controversial. Makes several contacts with the 16S rRNA in the 70S ribosome. In Chlorobium chlorochromatii (strain CaD3), this protein is Large ribosomal subunit protein uL2.